Reading from the N-terminus, the 700-residue chain is MTTLEEISALTRPRHPDYWTEIDSAAVDTIRVLAADAVQKVGNGHPGTAMSLAPLAYTLFQRTMRHDPSDTHWLGRDRFVLSAGHSSLTLYIQLYLGGFGLELSDIESLRTWGSKTPGHPEFRHTPGVEITTGPLGQGLASAVGMAMASRYERGLFDPDAEPGASPFDHYIYVIASDGDIEEGVTSEASSLAAVQQLGNLIVFYDRNQISIEDDTNIALCEDTAARYRAYGWHVQEVEGGENVVGIEEAIANAQAVTDRPSFIALRTVIGYPAPNLMDTGKAHGAALGDDEVAAVKKIVGFDPDKTFQVREDVLTHTRGLVARGKQAHERWQLEFDAWARREPERKALLDRLLAQKLPDGWDADLPHWEPGSKALATRAASGAVLSALGPKLPELWGGSADLAGSNNTTIKGADSFGPPSISTKEYTAHWYGRTLHFGVREHAMGAILSGIVLHGPTRAYGGTFLQFSDYMRPAVRLAALMDIDTIYVWTHDSIGLGEDGPTHQPIEHLSALRAIPRLSVVRPADANETAYAWRTILARRNGSGPVGLILTRQGVPVLDGTDAEGVARGGYVLSDAGGLQPGEEPDVILIATGSEVQLAVAAQTLLADNDILARVVSMPCLEWFEAQPYEYRDAVLPPTVSARVAVEAGVAQCWHQLVGDTGEIVSIEHYGESADHKTLFREYGFTAEAVAAAAERALDN.

At Thr2 the chain carries N-acetylthreonine. A substrate-binding site is contributed by His45. Thiamine diphosphate is bound by residues Thr48, His85, 133 to 135 (GPL), and Leu135. Asp177 is a Mg(2+) binding site. The thiamine diphosphate site is built by Gly178 and Asn207. The Mg(2+) site is built by Asn207 and Ile209. Residues His283, Arg378, and Ser405 each contribute to the substrate site. A thiamine diphosphate-binding site is contributed by His283. Glu441 serves as the catalytic Proton donor. Phe467 contacts thiamine diphosphate. Substrate-binding residues include His491, Asp499, and Arg552.

This sequence belongs to the transketolase family. As to quaternary structure, homodimer. The cofactor is Mg(2+). Requires Ca(2+) as cofactor. Mn(2+) serves as cofactor. Co(2+) is required as a cofactor. It depends on thiamine diphosphate as a cofactor.

It carries out the reaction D-sedoheptulose 7-phosphate + D-glyceraldehyde 3-phosphate = aldehydo-D-ribose 5-phosphate + D-xylulose 5-phosphate. Its function is as follows. Catalyzes the reversible transfer of a two-carbon ketol group from sedoheptulose-7-phosphate to glyceraldehyde-3-phosphate, producing xylulose-5-phosphate and ribose-5-phosphate. Catalyzes the transfer of a two-carbon ketol group from a ketose donor to an aldose acceptor, via a covalent intermediate with the cofactor thiamine pyrophosphate. The sequence is that of Transketolase (tkt) from Mycobacterium tuberculosis (strain ATCC 25618 / H37Rv).